Here is a 189-residue protein sequence, read N- to C-terminus: Transcription factor FapR (189 aa).

This sequence belongs to the FapR family.

Functionally, transcriptional factor involved in regulation of membrane lipid biosynthesis by repressing genes involved in fatty acid and phospholipid metabolism. The protein is Transcription factor FapR of Exiguobacterium sp. (strain ATCC BAA-1283 / AT1b).